A 261-amino-acid polypeptide reads, in one-letter code: Undecaprenyl-diphosphatase (261 aa).

8 consecutive transmembrane segments (helical) span residues 9-31 (ALLL…GHLT), 46-66 (FLKT…LLLY), 80-100 (IAVA…LIKG), 102-122 (ILGN…VLLF), 137-157 (ALPL…ALFP), 180-200 (AEFS…YDLW), 209-229 (GGWS…LVTV), and 240-260 (GFRP…FFFL).

This sequence belongs to the UppP family.

The protein localises to the cell inner membrane. The enzyme catalyses di-trans,octa-cis-undecaprenyl diphosphate + H2O = di-trans,octa-cis-undecaprenyl phosphate + phosphate + H(+). Its function is as follows. Catalyzes the dephosphorylation of undecaprenyl diphosphate (UPP). Confers resistance to bacitracin. This chain is Undecaprenyl-diphosphatase, found in Thermus thermophilus (strain ATCC 27634 / DSM 579 / HB8).